The sequence spans 402 residues: NADH dehydrogenase [ubiquinone] 1 alpha subcomplex subunit 9, mitochondrial (402 aa).

The transit peptide at 1-43 (MQVVSRRLVQRPLVGGASIYSSSSLRSLYGVSNHLNGTDNCRY) directs the protein to the mitochondrion.

Belongs to the complex I NDUFA9 subunit family. In terms of assembly, complex I is composed of at least 49 different subunits. This a component of the hydrophobic protein fraction. FAD is required as a cofactor.

The protein localises to the mitochondrion matrix. Its function is as follows. Accessory subunit of the mitochondrial membrane respiratory chain NADH dehydrogenase (Complex I), that is believed not to be involved in catalysis. Complex I functions in the transfer of electrons from NADH to the respiratory chain. The immediate electron acceptor for the enzyme is believed to be ubiquinone. The sequence is that of NADH dehydrogenase [ubiquinone] 1 alpha subcomplex subunit 9, mitochondrial from Arabidopsis thaliana (Mouse-ear cress).